Reading from the N-terminus, the 31-residue chain is Cytochrome b6-f complex subunit 6 (31 aa).

A helical transmembrane segment spans residues 4-24 (ILTYFGILFGILTITVIIFVA).

The protein belongs to the PetL family. The 4 large subunits of the cytochrome b6-f complex are cytochrome b6, subunit IV (17 kDa polypeptide, PetD), cytochrome f and the Rieske protein, while the 4 small subunits are PetG, PetL, PetM and PetN. The complex functions as a dimer.

The protein resides in the plastid. It is found in the chloroplast thylakoid membrane. Functionally, component of the cytochrome b6-f complex, which mediates electron transfer between photosystem II (PSII) and photosystem I (PSI), cyclic electron flow around PSI, and state transitions. PetL is important for photoautotrophic growth as well as for electron transfer efficiency and stability of the cytochrome b6-f complex. The chain is Cytochrome b6-f complex subunit 6 from Chaetosphaeridium globosum (Charophycean green alga).